The following is a 232-amino-acid chain: MDDSNDSSSAGPDGRLHAVDPSLTERQRTILNVIRSSVTSRGYPPSIREIGDAVGLTSTSSVAHQLRTLERKGYLRRDPNRPRAVDVRGVDDDVAAPATEVAGSDALPEPTFVPVLGRIAAGGPILAEEAVEDVFPLPRELVGDGTLFLLKVVGDSMVEAAICDGDWVVVRQQHVADNADIVAAMIDGEATVKTFKRAGGQVWLMPHNPAFDPIPGNDATVLGKVVTVIRKV.

Residues 1–10 (MDDSNDSSSA) are compositionally biased toward polar residues. Positions 1 to 22 (MDDSNDSSSAGPDGRLHAVDPS) are disordered. Positions 47–67 (IREIGDAVGLTSTSSVAHQLR) form a DNA-binding region, H-T-H motif. Catalysis depends on for autocatalytic cleavage activity residues serine 156 and lysine 193.

The protein belongs to the peptidase S24 family. As to quaternary structure, homodimer.

The catalysed reaction is Hydrolysis of Ala-|-Gly bond in repressor LexA.. Functionally, represses a number of genes involved in the response to DNA damage (SOS response), including recA and lexA. In the presence of single-stranded DNA, RecA interacts with LexA causing an autocatalytic cleavage which disrupts the DNA-binding part of LexA, leading to derepression of the SOS regulon and eventually DNA repair. The protein is LexA repressor of Mycolicibacterium paratuberculosis (strain ATCC BAA-968 / K-10) (Mycobacterium paratuberculosis).